The primary structure comprises 499 residues: Glycerol kinase (499 aa).

Thr12 contributes to the ADP binding site. ATP-binding residues include Thr12, Thr13, and Ser14. Sn-glycerol 3-phosphate is bound at residue Thr12. ADP is bound at residue Arg16. Sn-glycerol 3-phosphate-binding residues include Arg82, Glu83, and Tyr134. The glycerol site is built by Arg82, Glu83, and Tyr134. At His230 the chain carries Phosphohistidine; by HPr. Sn-glycerol 3-phosphate is bound at residue Asp244. Asp244 and Gln245 together coordinate glycerol. The ADP site is built by Thr266 and Gly309. Residues Thr266, Gly309, Gln313, and Gly410 each coordinate ATP. 2 residues coordinate ADP: Gly410 and Asn414.

Belongs to the FGGY kinase family. Homotetramer and homodimer (in equilibrium). The phosphoenolpyruvate-dependent sugar phosphotransferase system (PTS), including enzyme I, and histidine-containing protein (HPr) are required for the phosphorylation, which leads to the activation of the enzyme.

It carries out the reaction glycerol + ATP = sn-glycerol 3-phosphate + ADP + H(+). The protein operates within polyol metabolism; glycerol degradation via glycerol kinase pathway; sn-glycerol 3-phosphate from glycerol: step 1/1. Activated by phosphorylation and inhibited by fructose 1,6-bisphosphate (FBP). Key enzyme in the regulation of glycerol uptake and metabolism. Catalyzes the phosphorylation of glycerol to yield sn-glycerol 3-phosphate. This Staphylococcus haemolyticus (strain JCSC1435) protein is Glycerol kinase.